A 455-amino-acid polypeptide reads, in one-letter code: tRNA modification GTPase MnmE (455 aa).

Residues R26, E86, and R125 each coordinate (6S)-5-formyl-5,6,7,8-tetrahydrofolate. The TrmE-type G domain maps to G222–F376. N232 serves as a coordination point for K(+). GTP contacts are provided by residues N232 to S237, T251 to T257, and D276 to G279. Mg(2+) is bound at residue S236. 3 residues coordinate K(+): T251, I253, and T256. Residue T257 coordinates Mg(2+). K455 contacts (6S)-5-formyl-5,6,7,8-tetrahydrofolate.

This sequence belongs to the TRAFAC class TrmE-Era-EngA-EngB-Septin-like GTPase superfamily. TrmE GTPase family. Homodimer. Heterotetramer of two MnmE and two MnmG subunits. The cofactor is K(+).

The protein localises to the cytoplasm. Functionally, exhibits a very high intrinsic GTPase hydrolysis rate. Involved in the addition of a carboxymethylaminomethyl (cmnm) group at the wobble position (U34) of certain tRNAs, forming tRNA-cmnm(5)s(2)U34. In Lactococcus lactis subsp. cremoris (strain MG1363), this protein is tRNA modification GTPase MnmE.